We begin with the raw amino-acid sequence, 78 residues long: MSTIEERVKKIVAEQLGVKEDEVTNEKSFVDDLGADSLDTVELVMALEEEFETEIPDEEAEKITTVQAAIDYVNSHKA.

One can recognise a Carrier domain in the interval Ser2–Lys77. The residue at position 37 (Ser37) is an O-(pantetheine 4'-phosphoryl)serine.

Belongs to the acyl carrier protein (ACP) family. 4'-phosphopantetheine is transferred from CoA to a specific serine of apo-ACP by AcpS. This modification is essential for activity because fatty acids are bound in thioester linkage to the sulfhydryl of the prosthetic group.

The protein localises to the cytoplasm. The protein operates within lipid metabolism; fatty acid biosynthesis. Its function is as follows. Carrier of the growing fatty acid chain in fatty acid biosynthesis. This Pseudomonas putida (strain GB-1) protein is Acyl carrier protein.